Consider the following 390-residue polypeptide: Queuine tRNA-ribosyltransferase (390 aa).

Aspartate 92 acts as the Proton acceptor in catalysis. Substrate-binding positions include 92-96 (DSGGF), aspartate 146, glutamine 195, and glycine 222. The RNA binding stretch occupies residues 253 to 259 (GVGTPED). Residue aspartate 272 is the Nucleophile of the active site. The tract at residues 277–281 (TRNAR) is RNA binding; important for wobble base 34 recognition. Positions 310, 312, 315, and 354 each coordinate Zn(2+).

The protein belongs to the queuine tRNA-ribosyltransferase family. Homodimer. Within each dimer, one monomer is responsible for RNA recognition and catalysis, while the other monomer binds to the replacement base PreQ1. It depends on Zn(2+) as a cofactor.

The enzyme catalyses 7-aminomethyl-7-carbaguanine + guanosine(34) in tRNA = 7-aminomethyl-7-carbaguanosine(34) in tRNA + guanine. Its pathway is tRNA modification; tRNA-queuosine biosynthesis. In terms of biological role, catalyzes the base-exchange of a guanine (G) residue with the queuine precursor 7-aminomethyl-7-deazaguanine (PreQ1) at position 34 (anticodon wobble position) in tRNAs with GU(N) anticodons (tRNA-Asp, -Asn, -His and -Tyr). Catalysis occurs through a double-displacement mechanism. The nucleophile active site attacks the C1' of nucleotide 34 to detach the guanine base from the RNA, forming a covalent enzyme-RNA intermediate. The proton acceptor active site deprotonates the incoming PreQ1, allowing a nucleophilic attack on the C1' of the ribose to form the product. After dissociation, two additional enzymatic reactions on the tRNA convert PreQ1 to queuine (Q), resulting in the hypermodified nucleoside queuosine (7-(((4,5-cis-dihydroxy-2-cyclopenten-1-yl)amino)methyl)-7-deazaguanosine). The protein is Queuine tRNA-ribosyltransferase of Acidovorax ebreus (strain TPSY) (Diaphorobacter sp. (strain TPSY)).